A 164-amino-acid chain; its full sequence is Cytochrome c-type biogenesis protein CcmE (164 aa).

The Cytoplasmic portion of the chain corresponds to 1-8; it reads MNPRRKQR. A helical; Signal-anchor for type II membrane protein membrane pass occupies residues 9–29; sequence LAVVGIIGFLIVSAVGLMLYA. Over 30–164 the chain is Periplasmic; it reads LNDSIDLFYT…YESSNGAGSK (135 aa). 2 residues coordinate heme: H128 and Y132. The disordered stretch occupies residues 142–164; sequence KGIKHVKPENMPTYESSNGAGSK. The span at 154-164 shows a compositional bias: polar residues; it reads TYESSNGAGSK.

It belongs to the CcmE/CycJ family.

Its subcellular location is the cell inner membrane. Heme chaperone required for the biogenesis of c-type cytochromes. Transiently binds heme delivered by CcmC and transfers the heme to apo-cytochromes in a process facilitated by CcmF and CcmH. The protein is Cytochrome c-type biogenesis protein CcmE of Alteromonas mediterranea (strain DSM 17117 / CIP 110805 / LMG 28347 / Deep ecotype).